We begin with the raw amino-acid sequence, 345 residues long: Acetylserotonin O-methyltransferase (345 aa).

Residues Tyr147, Trp164, Asp210, 235-237 (GDF), and Arg252 each bind S-adenosyl-L-methionine. His255 functions as the Proton donor/acceptor in the catalytic mechanism. Substrate-binding residues include Asp256, Asn302, and Gln306.

The protein belongs to the class I-like SAM-binding methyltransferase superfamily. Cation-independent O-methyltransferase family. Homodimer. As to expression, highly expressed in pineal gland. In the retina, 10- to 100-fold lower expression compared to pineal gland, if any.

It carries out the reaction N-acetylserotonin + S-adenosyl-L-methionine = melatonin + S-adenosyl-L-homocysteine + H(+). The protein operates within aromatic compound metabolism; melatonin biosynthesis; melatonin from serotonin: step 1/2. In terms of biological role, catalyzes the transfer of a methyl group onto N-acetylserotonin, producing melatonin (N-acetyl-5-methoxytryptamine). This is Acetylserotonin O-methyltransferase (ASMT) from Macaca mulatta (Rhesus macaque).